A 917-amino-acid chain; its full sequence is Intercellular adhesion molecule 5 (917 aa).

Positions 1 to 31 are cleaved as a signal peptide; it reads MPGPSPGLRRALLGLWAALGLGILGISAVAL. Residues 32–833 lie on the Extracellular side of the membrane; it reads EPFWADLQPR…RITVRVAGPW (802 aa). 9 consecutive Ig-like C2-type domains span residues 48-130, 135-235, 242-329, 337-402, 408-486, 491-567, 572-651, 665-738, and 745-828; these read GGSL…PLPS, GENF…SLIA, DSER…LLTL, GKMV…SSEL, PRLD…VTLT, PALD…VAVT, PSFE…NRHG, PQMD…RTVT, and PVVA…ITVR. Residue asparagine 54 is glycosylated (N-linked (GlcNAc...) (high mannose) asparagine). 2 disulfides stabilise this stretch: cysteine 55-cysteine 99 and cysteine 59-cysteine 103. Residues asparagine 74 and asparagine 137 are each glycosylated (N-linked (GlcNAc...) asparagine). Cysteine 142 and cysteine 198 are oxidised to a cystine. Residue threonine 182 is modified to Phosphothreonine. Residues asparagine 195, asparagine 214, asparagine 274, asparagine 316, asparagine 371, and asparagine 397 are each glycosylated (N-linked (GlcNAc...) asparagine). Cysteines 249 and 302 form a disulfide. A disulfide bond links cysteine 344 and cysteine 383. 3 cysteine pairs are disulfide-bonded: cysteine 415-cysteine 470, cysteine 498-cysteine 551, and cysteine 579-cysteine 644. 2 N-linked (GlcNAc...) asparagine glycosylation sites follow: asparagine 582 and asparagine 645. Cysteine 672 and cysteine 724 are oxidised to a cystine. Residues asparagine 762, asparagine 793, and asparagine 794 are each glycosylated (N-linked (GlcNAc...) asparagine). A disulfide bond links cysteine 767 and cysteine 812. Residues 834–854 form a helical membrane-spanning segment; sequence LWVAVGGAAGGAALLAAGAGL. The Cytoplasmic portion of the chain corresponds to 855 to 917; sequence AFYVQSTACK…EVFAIQLTSS (63 aa). Residues 884-893 are compositionally biased toward gly residues; sequence GAGGTPGAEG. Residues 884 to 908 are disordered; it reads GAGGTPGAEGGAETPGTAESPADGE.

It belongs to the immunoglobulin superfamily. ICAM family. Glycosylation at Asn-54 is critical for functional folding. In terms of tissue distribution, expressed on neurons in the most rostral segment of the mammalian brain, the telencephalon.

It localises to the membrane. Its function is as follows. ICAM proteins are ligands for the leukocyte adhesion protein LFA-1 (integrin alpha-L/beta-2). The sequence is that of Intercellular adhesion molecule 5 (Icam5) from Mus musculus (Mouse).